A 608-amino-acid chain; its full sequence is tRNA (guanine(37)-N(1))-methyltransferase 1 (608 aa).

A disordered region spans residues 207-229; it reads SRPKKKKRRKEEERSEGKKRTGK. Basic and acidic residues predominate over residues 216-229; sequence KEEERSEGKKRTGK. Residues Arg425, 463-464, 491-492, and Asn514 contribute to the S-adenosyl-L-methionine site; these read DL and DG.

Belongs to the class I-like SAM-binding methyltransferase superfamily. TRM5/TYW2 family. As to quaternary structure, monomer.

The protein resides in the mitochondrion matrix. Its subcellular location is the nucleus. It localises to the cytoplasm. It carries out the reaction guanosine(37) in tRNA + S-adenosyl-L-methionine = N(1)-methylguanosine(37) in tRNA + S-adenosyl-L-homocysteine + H(+). Its function is as follows. Specifically methylates the N1 position of guanosine-37 in various cytoplasmic and mitochondrial tRNAs. Methylation is not dependent on the nature of the nucleoside 5' of the target nucleoside. This is the first step in the biosynthesis of wybutosine (yW), a modified base adjacent to the anticodon of tRNAs and required for accurate decoding. The protein is tRNA (guanine(37)-N(1))-methyltransferase 1 of Vitis vinifera (Grape).